The sequence spans 272 residues: Bifunctional protein FolD (272 aa).

NADP(+)-binding positions include 155–157 (GRS), Ser182, and Ile223.

Belongs to the tetrahydrofolate dehydrogenase/cyclohydrolase family. Homodimer.

It catalyses the reaction (6R)-5,10-methylene-5,6,7,8-tetrahydrofolate + NADP(+) = (6R)-5,10-methenyltetrahydrofolate + NADPH. It carries out the reaction (6R)-5,10-methenyltetrahydrofolate + H2O = (6R)-10-formyltetrahydrofolate + H(+). Its pathway is one-carbon metabolism; tetrahydrofolate interconversion. Functionally, catalyzes the oxidation of 5,10-methylenetetrahydrofolate to 5,10-methenyltetrahydrofolate and then the hydrolysis of 5,10-methenyltetrahydrofolate to 10-formyltetrahydrofolate. The protein is Bifunctional protein FolD of Fervidobacterium nodosum (strain ATCC 35602 / DSM 5306 / Rt17-B1).